A 243-amino-acid chain; its full sequence is UPF0246 protein SUB1767 (243 aa).

The protein belongs to the UPF0246 family.

The chain is UPF0246 protein SUB1767 from Streptococcus uberis (strain ATCC BAA-854 / 0140J).